The sequence spans 439 residues: Histidine--tRNA ligase (439 aa).

It belongs to the class-II aminoacyl-tRNA synthetase family. As to quaternary structure, homodimer.

It localises to the cytoplasm. The enzyme catalyses tRNA(His) + L-histidine + ATP = L-histidyl-tRNA(His) + AMP + diphosphate + H(+). The protein is Histidine--tRNA ligase of Leptospira borgpetersenii serovar Hardjo-bovis (strain L550).